A 66-amino-acid polypeptide reads, in one-letter code: Nigrocin-2ISb (66 aa).

Residues 1 to 22 (MFTLKKSMLLLFFLGTINLSLC) form the signal peptide. The propeptide at 23–43 (QEERDAEEERRDEDNAKMEEI) is removed in mature form. Cysteines 60 and 66 form a disulfide.

Expressed by the skin glands.

It localises to the secreted. In terms of biological role, has antimicrobial activity against Gram-negative bacterium E.coli ATCC 8739 (MIC=50 ug), against Gram positive bacteria S.aureus ATCC 6538 (MIC=3.1 ug), methicillin-resistant S.aureus ATCC 43300 (MIC=12.5 ug), B.subtilis ATCC 6633 (MIC=12.5 ug) and against fungus C.albicans ATCC 90028 (MIC=50 ug). This chain is Nigrocin-2ISb, found in Odorrana ishikawae (Ishikawa's frog).